The primary structure comprises 274 residues: Diaminopimelate epimerase (274 aa).

Positions 11, 44, and 64 each coordinate substrate. Cys73 serves as the catalytic Proton donor. Substrate is bound by residues 74-75 (GN), Asn157, Asn190, and 208-209 (ER). The active-site Proton acceptor is Cys217. A substrate-binding site is contributed by 218-219 (GS).

Belongs to the diaminopimelate epimerase family. As to quaternary structure, homodimer.

Its subcellular location is the cytoplasm. It catalyses the reaction (2S,6S)-2,6-diaminopimelate = meso-2,6-diaminopimelate. It participates in amino-acid biosynthesis; L-lysine biosynthesis via DAP pathway; DL-2,6-diaminopimelate from LL-2,6-diaminopimelate: step 1/1. Functionally, catalyzes the stereoinversion of LL-2,6-diaminopimelate (L,L-DAP) to meso-diaminopimelate (meso-DAP), a precursor of L-lysine and an essential component of the bacterial peptidoglycan. The chain is Diaminopimelate epimerase from Serratia proteamaculans (strain 568).